The sequence spans 245 residues: Rhamnogalacturonan acetylesterase (245 aa).

An N-terminal signal peptide occupies residues Met-1–Ala-17. The active-site Nucleophile is Ser-26. A disulfide bond links Cys-100 and Cys-108. Catalysis depends on residues Asp-204 and His-207. Cysteines 226 and 244 form a disulfide.

The protein belongs to the 'GDSL' lipolytic enzyme family.

It localises to the secreted. It catalyses the reaction Hydrolytic cleavage of 2-O-acetyl- or 3-O-acetyl groups of alpha-D-galacturonic acid in rhamnogalacturonan I.. In terms of biological role, plays a key role in the degradation of rhamnogalacturonan in the cell wall. Involved in degradation of pectin. This chain is Rhamnogalacturonan acetylesterase, found in Emericella nidulans (strain FGSC A4 / ATCC 38163 / CBS 112.46 / NRRL 194 / M139) (Aspergillus nidulans).